Consider the following 418-residue polypeptide: Ras association domain-containing protein 5 (418 aa).

The interval 1–118 (MAMASPAIGQ…QPQDPRVPAE (118 aa)) is disordered. A2 carries the N-acetylthreonine modification. The segment covering 77–89 (SRPARPLRPGLQQ) has biased composition (low complexity). The segment at 122-170 (GHCFAELVLPGGPGWCDLCGREVLRQALRCTNCKFTCHPECRSLIQLDC) adopts a Phorbol-ester/DAG-type zinc-finger fold. Phosphoserine occurs at positions 182 and 279. The Ras-associating domain maps to 274–364 (TDKRTSFYLP…LSFVLKENET (91 aa)). Phosphothreonine is present on T352. The SARAH domain maps to 366–413 (EVEWDAFSIPELQNFLTILEKEEQDKIQQVQKKYDKFRQKLEEALRES).

In terms of assembly, interacts directly with activated HRAS; a RASSF5-STK4/MST1 complex probably associates with activated HRAS. Interacts with KRAS. Probably interacts with Ras-like GTPases RRAS, MRAS, RAP1B, RAP2A and RALA. Interacts with RRAS2. Can self-associate. Interacts with RSSF1 isoform A. The RSSF1 isoform A-RSSF5 heterodimer probably mediates the association of RSSF1 with HRAS. Isoform 2 interacts with activated RAP1A and ITGAL/LFA-1. Binds STK4/MST1, inhibiting STK4/MST1 autoactivation. In terms of tissue distribution, widely expressed. Frequently down-regulated in lung tumor cell lines and primary lung tumors.

The protein localises to the cytoplasm. It is found in the cytoskeleton. Its function is as follows. Potential tumor suppressor. Seems to be involved in lymphocyte adhesion by linking RAP1A activation upon T-cell receptor or chemokine stimulation to integrin activation. Isoform 2 stimulates lymphocyte polarization and the patch-like distribution of ITGAL/LFA-1, resulting in an enhanced adhesion to ICAM1. Together with RAP1A may participate in regulation of microtubule growth. The association of isoform 2 with activated RAP1A is required for directional movement of endothelial cells during wound healing. May be involved in regulation of Ras apoptotic function. The RASSF5-STK4/MST1 complex may mediate HRAS and KRAS induced apoptosis. This chain is Ras association domain-containing protein 5 (RASSF5), found in Homo sapiens (Human).